The following is a 970-amino-acid chain: Protein tweety (970 aa).

The Extracellular segment spans residues M1–S47. 2 N-linked (GlcNAc...) asparagine glycosylation sites follow: N27 and N34. The helical transmembrane segment at L48 to F68 threads the bilayer. Residues Y69–K89 are Cytoplasmic-facing. The helical transmembrane segment at V90–N110 threads the bilayer. Residues D111 to P219 are Extracellular-facing. N136, N166, and N183 each carry an N-linked (GlcNAc...) asparagine glycan. A helical membrane pass occupies residues G220–A240. The Cytoplasmic segment spans residues R241–A246. The chain crosses the membrane as a helical span at residues L247–L267. Over Y268–G395 the chain is Extracellular. Residue N359 is glycosylated (N-linked (GlcNAc...) asparagine). A helical transmembrane segment spans residues L396 to V416. Residues D417 to L970 are Cytoplasmic-facing. Residues N532 to C571 are compositionally biased toward low complexity. 3 disordered regions span residues N532–H587, R677–D763, and M849–L970. Over residues H572–H587 the composition is skewed to basic residues. Low complexity-rich tracts occupy residues H689 to Q700, Q707 to H737, and Q745 to P759. Pro residues predominate over residues I852–A868. Gly residues-rich tracts occupy residues Q883–A894 and N931–A945. Polar residues predominate over residues D961–L970.

The protein belongs to the tweety family.

The protein resides in the cell membrane. In terms of biological role, non-essential protein that probably acts as a chloride channel. The sequence is that of Protein tweety (tty) from Drosophila melanogaster (Fruit fly).